The chain runs to 207 residues: CASP-like protein F16 (207 aa).

A disordered region spans residues 1 to 30 (MEKSEKGNGVAPATRSPMALMGSSRNENQE). The Cytoplasmic portion of the chain corresponds to 1 to 37 (MEKSEKGNGVAPATRSPMALMGSSRNENQEVNTSMRT). Residues 38 to 58 (AETMLRLVPMALGVAALVVML) traverse the membrane as a helical segment. Residues 59-79 (KNSQSNDFGSVSYSDLGAFRY) lie on the Extracellular side of the membrane. The helical transmembrane segment at 80–100 (LVHANGICAGYSLLSAIIAAV) threads the bilayer. Topologically, residues 101–108 (PSPSTMPR) are cytoplasmic. The helical transmembrane segment at 109 to 129 (AWTFFLLDQILTYVILGAAAV) threads the bilayer. The Extracellular portion of the chain corresponds to 130–159 (STEVLYLANKGDSAITWSAACGTFAGFCHK). The helical transmembrane segment at 160-180 (ATIAVVITFVAVICYAVLSLV) threads the bilayer. Topologically, residues 181-207 (SSYRLFTKFDAPVNYPSKTIEATVFHG) are cytoplasmic.

It belongs to the Casparian strip membrane proteins (CASP) family. In terms of assembly, homodimer and heterodimers.

It localises to the cell membrane. The sequence is that of CASP-like protein F16 (F16) from Gossypium hirsutum (Upland cotton).